Consider the following 193-residue polypeptide: Acyl carrier protein phosphodiesterase (193 aa).

It belongs to the AcpH family.

It catalyses the reaction holo-[ACP] + H2O = apo-[ACP] + (R)-4'-phosphopantetheine + H(+). Its function is as follows. Converts holo-ACP to apo-ACP by hydrolytic cleavage of the phosphopantetheine prosthetic group from ACP. This chain is Acyl carrier protein phosphodiesterase, found in Pectobacterium atrosepticum (strain SCRI 1043 / ATCC BAA-672) (Erwinia carotovora subsp. atroseptica).